The sequence spans 502 residues: Aspartyl/glutamyl-tRNA(Asn/Gln) amidotransferase subunit B (502 aa).

Belongs to the GatB/GatE family. GatB subfamily. Heterotrimer of A, B and C subunits.

The enzyme catalyses L-glutamyl-tRNA(Gln) + L-glutamine + ATP + H2O = L-glutaminyl-tRNA(Gln) + L-glutamate + ADP + phosphate + H(+). It carries out the reaction L-aspartyl-tRNA(Asn) + L-glutamine + ATP + H2O = L-asparaginyl-tRNA(Asn) + L-glutamate + ADP + phosphate + 2 H(+). Allows the formation of correctly charged Asn-tRNA(Asn) or Gln-tRNA(Gln) through the transamidation of misacylated Asp-tRNA(Asn) or Glu-tRNA(Gln) in organisms which lack either or both of asparaginyl-tRNA or glutaminyl-tRNA synthetases. The reaction takes place in the presence of glutamine and ATP through an activated phospho-Asp-tRNA(Asn) or phospho-Glu-tRNA(Gln). In Arthrobacter sp. (strain FB24), this protein is Aspartyl/glutamyl-tRNA(Asn/Gln) amidotransferase subunit B.